A 250-amino-acid polypeptide reads, in one-letter code: 3-deoxy-manno-octulosonate cytidylyltransferase (250 aa).

This sequence belongs to the KdsB family.

The protein resides in the cytoplasm. The enzyme catalyses 3-deoxy-alpha-D-manno-oct-2-ulosonate + CTP = CMP-3-deoxy-beta-D-manno-octulosonate + diphosphate. Its pathway is nucleotide-sugar biosynthesis; CMP-3-deoxy-D-manno-octulosonate biosynthesis; CMP-3-deoxy-D-manno-octulosonate from 3-deoxy-D-manno-octulosonate and CTP: step 1/1. The protein operates within bacterial outer membrane biogenesis; lipopolysaccharide biosynthesis. Functionally, activates KDO (a required 8-carbon sugar) for incorporation into bacterial lipopolysaccharide in Gram-negative bacteria. The sequence is that of 3-deoxy-manno-octulosonate cytidylyltransferase from Yersinia pseudotuberculosis serotype O:1b (strain IP 31758).